Here is a 427-residue protein sequence, read N- to C-terminus: Methylenetetrahydrofolate--tRNA-(uracil-5-)-methyltransferase TrmFO (427 aa).

Gly8–Gly13 is an FAD binding site.

This sequence belongs to the MnmG family. TrmFO subfamily. FAD serves as cofactor.

Its subcellular location is the cytoplasm. It carries out the reaction uridine(54) in tRNA + (6R)-5,10-methylene-5,6,7,8-tetrahydrofolate + NADH + H(+) = 5-methyluridine(54) in tRNA + (6S)-5,6,7,8-tetrahydrofolate + NAD(+). The enzyme catalyses uridine(54) in tRNA + (6R)-5,10-methylene-5,6,7,8-tetrahydrofolate + NADPH + H(+) = 5-methyluridine(54) in tRNA + (6S)-5,6,7,8-tetrahydrofolate + NADP(+). Functionally, catalyzes the folate-dependent formation of 5-methyl-uridine at position 54 (M-5-U54) in all tRNAs. This chain is Methylenetetrahydrofolate--tRNA-(uracil-5-)-methyltransferase TrmFO, found in Mycoplasmopsis agalactiae (strain NCTC 10123 / CIP 59.7 / PG2) (Mycoplasma agalactiae).